A 122-amino-acid polypeptide reads, in one-letter code: Large ribosomal subunit protein uL14 (122 aa).

The protein belongs to the universal ribosomal protein uL14 family. In terms of assembly, part of the 50S ribosomal subunit. Forms a cluster with proteins L3 and L19. In the 70S ribosome, L14 and L19 interact and together make contacts with the 16S rRNA in bridges B5 and B8.

Functionally, binds to 23S rRNA. Forms part of two intersubunit bridges in the 70S ribosome. This Enterococcus faecalis (strain ATCC 700802 / V583) protein is Large ribosomal subunit protein uL14.